The following is a 384-amino-acid chain: Carbazole 1,9a-dioxygenase, terminal oxygenase component CarAa (384 aa).

The region spanning 29 to 135 (WYPVMFSKEI…VQEAKGCVFI (107 aa)) is the Rieske domain. The [2Fe-2S] cluster site is built by cysteine 69, histidine 71, cysteine 90, and histidine 93.

In terms of assembly, homotrimer. Carbazole 1,9a-dioxygenase complex consists of a terminal oxygenase component CarAa, a ferredoxin reductase component CarAd and a ferredoxin component CarAc. [2Fe-2S] cluster serves as cofactor.

It carries out the reaction 9H-carbazole + NADH + O2 + H(+) = 2'-aminobiphenyl-2,3-diol + NAD(+). The catalysed reaction is 9H-carbazole + NADPH + O2 + H(+) = 2'-aminobiphenyl-2,3-diol + NADP(+). Its function is as follows. Part of the multicomponent carbazole 1,9a-dioxygenase (CARDO), that converts carbazole (CAR) into 2-aminobiphenyl-2,3-diol. Catalyzes the dioxygenation at the angular (C-9a) and adjacent (C-1) positions of carbazole to yield a highly unstable cis-hydrodiol intermediate which is spontaneously converted to 2-aminobiphenyl-2,3-diol. It is also able to attack the angular position adjacent of hetero atom of heterocyclic aromatic compounds such as polychlorinated dibenzo-p-dioxin (DD) and dibenzofuran (DBF). It was also shown that CARDO has the ability to metabolize biphenyl and polycyclic aromatic hydrocarbons, such as naphthalene and phenanthrene. The polypeptide is Carbazole 1,9a-dioxygenase, terminal oxygenase component CarAa (carAa) (Metapseudomonas resinovorans (Pseudomonas resinovorans)).